The sequence spans 371 residues: tRNA-specific 2-thiouridylase MnmA (371 aa).

Residues 14–21 (GMSGGVDS) and M40 contribute to the ATP site. Residues 100–102 (NPD) are interaction with target base in tRNA. C105 functions as the Nucleophile in the catalytic mechanism. A disulfide bridge links C105 with C201. G129 contacts ATP. The tract at residues 151–153 (KDQ) is interaction with tRNA. Residue C201 is the Cysteine persulfide intermediate of the active site. The tract at residues 309 to 310 (RY) is interaction with tRNA.

It belongs to the MnmA/TRMU family.

The protein resides in the cytoplasm. It catalyses the reaction S-sulfanyl-L-cysteinyl-[protein] + uridine(34) in tRNA + AH2 + ATP = 2-thiouridine(34) in tRNA + L-cysteinyl-[protein] + A + AMP + diphosphate + H(+). In terms of biological role, catalyzes the 2-thiolation of uridine at the wobble position (U34) of tRNA, leading to the formation of s(2)U34. This is tRNA-specific 2-thiouridylase MnmA from Halalkalibacterium halodurans (strain ATCC BAA-125 / DSM 18197 / FERM 7344 / JCM 9153 / C-125) (Bacillus halodurans).